A 142-amino-acid chain; its full sequence is Hemoglobin subunit alpha (142 aa).

Residues 1–142 (GLTAADKTLI…VEKALFETYR (142 aa)) enclose the Globin domain. Position 59 (histidine 59) interacts with O2. Residue histidine 88 participates in heme b binding.

The protein belongs to the globin family. In terms of assembly, heterotetramer of two alpha chains and two beta chains (an easy dimerization is also reported). As to expression, red blood cells.

Its function is as follows. Involved in oxygen transport from the lung to the various peripheral tissues. The chain is Hemoglobin subunit alpha (HBA) from Latimeria chalumnae (Coelacanth).